The chain runs to 119 residues: MGRGNSCGGGQSSLDYLFGGDAPAPKPVPAPRPAPTESNNGPAPPVTAVTATALTTATTSVEPAELNKQIPAGIKTPVNNYARAEGQNTGNFLTDRPSTKVHAAPGGGSSLDYLFTGGK.

Residues 1–11 (MGRGNSCGGGQ) are compositionally biased toward gly residues. 2 disordered regions span residues 1–47 (MGRG…PPVT) and 85–105 (EGQN…HAAP). Pro residues predominate over residues 24 to 34 (APKPVPAPRPA).

The protein belongs to the SPIRAL1 family. Ubiquitinated. Upon salt-stress induction, it is subject to proteasome-dependent degradation. Ubiquitous. High expression was associated with tissues undergoing rapid cell expansion, including the root elongation zone, hypocotyls of dark grown-seedlings, and cotyledons of light-grown seedlings.

The protein localises to the cytoplasm. Its subcellular location is the cytoskeleton. It is found in the phragmoplast. It localises to the spindle. Its function is as follows. Required for directional control of cell elongation. Stabilizes growing ends of cortical microtubules and influences their dynamic properties. Acts redundantly with SP1Ls in maintaining the cortical microtubules organization essential for anisotropic cell growth. Plays a key role in salt stress-induced microtubules disassembly. The protein is Protein SPIRAL1 (SPR1) of Arabidopsis thaliana (Mouse-ear cress).